A 155-amino-acid polypeptide reads, in one-letter code: Lipoprotein signal peptidase (155 aa).

4 helical membrane-spanning segments follow: residues 7-27 (WFWI…YITV), 39-59 (IIPG…FSAF), 63-83 (VGWL…FAYF), and 96-116 (GFIL…GYVV). Residues D117 and D133 contribute to the active site. Residues 126 to 146 (FPVFNLADVFINIGIICLLIS) form a helical membrane-spanning segment.

The protein belongs to the peptidase A8 family.

It localises to the cell inner membrane. It carries out the reaction Release of signal peptides from bacterial membrane prolipoproteins. Hydrolyzes -Xaa-Yaa-Zaa-|-(S,diacylglyceryl)Cys-, in which Xaa is hydrophobic (preferably Leu), and Yaa (Ala or Ser) and Zaa (Gly or Ala) have small, neutral side chains.. It participates in protein modification; lipoprotein biosynthesis (signal peptide cleavage). Functionally, this protein specifically catalyzes the removal of signal peptides from prolipoproteins. The protein is Lipoprotein signal peptidase of Microcystis aeruginosa (strain NIES-843 / IAM M-2473).